Here is a 182-residue protein sequence, read N- to C-terminus: Putative minor fimbrial subunit PmfF (182 aa).

The N-terminal stretch at 1–22 (MKNSIIKSAITCLLLLSPSTFA) is a signal peptide.

Belongs to the fimbrial protein family.

It is found in the fimbrium. In Proteus mirabilis (strain HI4320), this protein is Putative minor fimbrial subunit PmfF (pmfF).